A 203-amino-acid chain; its full sequence is Large ribosomal subunit protein bL25 (203 aa).

Belongs to the bacterial ribosomal protein bL25 family. CTC subfamily. In terms of assembly, part of the 50S ribosomal subunit; part of the 5S rRNA/L5/L18/L25 subcomplex. Contacts the 5S rRNA. Binds to the 5S rRNA independently of L5 and L18.

This is one of the proteins that binds to the 5S RNA in the ribosome where it forms part of the central protuberance. In Rickettsia rickettsii (strain Iowa), this protein is Large ribosomal subunit protein bL25.